The following is a 126-amino-acid chain: Integrin alpha-M (126 aa).

N-linked (GlcNAc...) asparagine glycans are attached at residues Asn-25, Asn-78, and Asn-106.

Belongs to the integrin alpha chain family. Heterodimer of an alpha and a beta chain. ITGAM associates with ITGB2. Found in a complex with CD177 and ITGB2/CD18. Interacts with JAM3. Interacts with THBD. Interacts with TMEM268; this interaction inhibits ITGAM degradation via the endosome-lysosome pathway.

It is found in the cell membrane. The protein localises to the membrane raft. Its function is as follows. Integrin ITGAM/ITGB2 is implicated in various adhesive interactions of monocytes, macrophages and granulocytes as well as in mediating the uptake of complement-coated particles. It is identical with CR-3, the receptor for the iC3b fragment of the third complement component. It probably recognizes the R-G-D peptide in C3b. Integrin ITGAM/ITGB2 is also a receptor for fibrinogen, factor X and ICAM1. It recognizes P1 and P2 peptides of fibrinogen gamma chain. Regulates neutrophil migration. In association with beta subunit ITGB2/CD18, required for CD177-PRTN3-mediated activation of TNF primed neutrophils. May regulate phagocytosis-induced apoptosis in extravasated neutrophils. May play a role in mast cell development. Required with TYROBP/DAP12 in microglia to control production of microglial superoxide ions which promote the neuronal apoptosis that occurs during brain development. The sequence is that of Integrin alpha-M (ITGAM) from Cavia porcellus (Guinea pig).